Consider the following 88-residue polypeptide: RQC P-site tRNA stabilizing factor (88 aa).

The region spanning 1 to 60 (MRLDKYLKVSRIIKRRTVAKEVADKGRIKVNGILAKSSTDLKVNDQVEIRFGNKLLLVKV) is the S4 RNA-binding domain.

Belongs to the RqcP family. Associates with stalled 50S ribosomal subunits. Binds to RqcH, 23S rRNA and the P-site tRNA. Does not require RqcH for association with 50S subunits.

In terms of biological role, key component of the ribosome quality control system (RQC), a ribosome-associated complex that mediates the extraction of incompletely synthesized nascent chains from stalled ribosomes and their subsequent degradation. RqcH recruits Ala-charged tRNA, and with RqcP directs the elongation of stalled nascent chains on 50S ribosomal subunits, leading to non-templated C-terminal alanine extensions (Ala tail). The Ala tail promotes nascent chain degradation. RqcP is associated with the translocation-like movement of the peptidyl-tRNA from the A-site into the P-site. The polypeptide is RQC P-site tRNA stabilizing factor (Streptococcus pneumoniae (strain ATCC BAA-255 / R6)).